The following is a 350-amino-acid chain: Streptomycin biosynthesis operon possible regulatory protein (350 aa).

Residues Met-1–Glu-10 are compositionally biased toward polar residues. Disordered stretches follow at residues Met-1 to Thr-20, Ala-168 to Thr-189, and Ala-211 to Asp-258. Composition is skewed to basic and acidic residues over residues Ile-177–Thr-189 and Asp-223–Gln-242.

This is Streptomycin biosynthesis operon possible regulatory protein (strR) from Streptomyces griseus.